The following is a 301-amino-acid chain: Sulfate adenylyltransferase subunit 2 2 (301 aa).

Belongs to the PAPS reductase family. CysD subfamily. In terms of assembly, heterodimer composed of CysD, the smaller subunit, and CysN.

It carries out the reaction sulfate + ATP + H(+) = adenosine 5'-phosphosulfate + diphosphate. It functions in the pathway sulfur metabolism; hydrogen sulfide biosynthesis; sulfite from sulfate: step 1/3. Its function is as follows. With CysN forms the ATP sulfurylase (ATPS) that catalyzes the adenylation of sulfate producing adenosine 5'-phosphosulfate (APS) and diphosphate, the first enzymatic step in sulfur assimilation pathway. APS synthesis involves the formation of a high-energy phosphoric-sulfuric acid anhydride bond driven by GTP hydrolysis by CysN coupled to ATP hydrolysis by CysD. This chain is Sulfate adenylyltransferase subunit 2 2, found in Shewanella sediminis (strain HAW-EB3).